The chain runs to 290 residues: Small ribosomal subunit biogenesis GTPase RsgA (290 aa).

The CP-type G domain occupies 62–213; sequence KNSLVRPPIV…IADTPGFSSL (152 aa). GTP contacts are provided by residues 111–114 and 156–164; these read SKMD and GQTGVGKST. Cys237, Cys242, His244, and Cys250 together coordinate Zn(2+).

It belongs to the TRAFAC class YlqF/YawG GTPase family. RsgA subfamily. Monomer. Associates with 30S ribosomal subunit, binds 16S rRNA. The cofactor is Zn(2+).

It localises to the cytoplasm. In terms of biological role, one of several proteins that assist in the late maturation steps of the functional core of the 30S ribosomal subunit. Helps release RbfA from mature subunits. May play a role in the assembly of ribosomal proteins into the subunit. Circularly permuted GTPase that catalyzes slow GTP hydrolysis, GTPase activity is stimulated by the 30S ribosomal subunit. In Streptococcus pyogenes serotype M3 (strain ATCC BAA-595 / MGAS315), this protein is Small ribosomal subunit biogenesis GTPase RsgA.